The primary structure comprises 657 residues: MESDSNIAIEEVKYPNILLEPVYYNNLEVIGSHLHKPDKNNLCNVCDVLNKITEEDVISAGAKQQRPMRLRSKPKPDICKGVSDSVKQKNTIINIDEITSTHDWQYNLRKDADAIVRYLMDRKCDINNFTIQDLIRVMRELNIIRNERQELFELLSHVKGSLSSNSVSVKTSHPLMVIYSHSDNKIGEQLKLLENTYDPSRYQALIDTTRFQSTNFVDMSTSSDMLFRFKDQDSIGYVHPILVALFGVKLPALENAMVLGDSYSLMKQLYNSKKVKPENYMLLINRLTEDSPIIFTGINDSVSSEIHRASIHTMLRKTILNLRLGIFYSKDCDLVDNHLMKIIHINSSQMMADEEQMLASILSIVGFRPALVSITDPYQPLNVVLKPVSYIVVSPSKMITTINNPISINSNSIYSLSFDNTTGRVMFMPANMRYQGTISCRTVDALPVLNSISHDRIINSPVIVNGTLIYYIERRQNKNIVSGECFTGFRSVINDRPMDIANELNINGITYLLKSAVCYKTHDLLSTMSGSCDGGDVFLKGYYTILFTEMGPWMYDPLSIYSKQSRESRLMRVMKNQYYKEHGNDDGMFYDWLKEESTKKLCDIKQQQLMHHTVMFEDDLLSHEEAMNLISRNCCILVYAQDYLPYLATKSITEIFV.

Residues 1-61 (MESDSNIAIE…ITEEDVISAG (61 aa)) constitute a propeptide that is removed on maturation.

The protein belongs to the poxviridae protein P4b family. The precursor is cleaved to a mature protein during virion maturation. Proteolytic cleavage of major core proteins P4a (A10L), P4b (A3L), and VP8 (L4R), which occurs at a late stage of core formation, is required for production of infectious mature virions (MV).

Its subcellular location is the virion. Functionally, major component of the virion core that undergoes proteolytic processing during the immature virion (IV) to mature virion (MV) transition. Essential for the formation of a structurally normal core. The protein is Major core protein 4b of Vertebrata (FPV).